The sequence spans 88 residues: Large ribosomal subunit protein bL31B (88 aa).

This sequence belongs to the bacterial ribosomal protein bL31 family. Type B subfamily. Part of the 50S ribosomal subunit.

This Corynebacterium glutamicum (strain R) protein is Large ribosomal subunit protein bL31B.